The following is a 371-amino-acid chain: Cysteine proteinase 1 (371 aa).

The signal sequence occupies residues 1-18 (MAHRVLLLLSLASAAAVA). The propeptide at 19–136 (AAVDAEDPLI…HEAPVLPTDG (118 aa)) is activation peptide. 2 cysteine pairs are disulfide-bonded: Cys-158/Cys-208 and Cys-192/Cys-241. The active site involves Cys-161. Asn-254 carries an N-linked (GlcNAc...) asparagine glycan. Cysteines 297 and 354 form a disulfide. Residues His-303 and Asn-330 contribute to the active site.

This sequence belongs to the peptidase C1 family. As to expression, expressed during the late stages of seed ripening, in mature seeds and during germination.

In terms of biological role, involved in the degradation of the storage protein zein. May play a role in proteolysis during emergencies. In Zea mays (Maize), this protein is Cysteine proteinase 1 (CCP1).